We begin with the raw amino-acid sequence, 364 residues long: Ribosomal RNA large subunit methyltransferase M (364 aa).

S-adenosyl-L-methionine contacts are provided by residues Ser-194, 227 to 230, Asp-246, Asp-266, and Asp-284; that span reads CPGG. The active-site Proton acceptor is Lys-313.

Belongs to the class I-like SAM-binding methyltransferase superfamily. RNA methyltransferase RlmE family. RlmM subfamily. Monomer.

The protein localises to the cytoplasm. The enzyme catalyses cytidine(2498) in 23S rRNA + S-adenosyl-L-methionine = 2'-O-methylcytidine(2498) in 23S rRNA + S-adenosyl-L-homocysteine + H(+). Functionally, catalyzes the 2'-O-methylation at nucleotide C2498 in 23S rRNA. The chain is Ribosomal RNA large subunit methyltransferase M from Actinobacillus succinogenes (strain ATCC 55618 / DSM 22257 / CCUG 43843 / 130Z).